The primary structure comprises 952 residues: Disintegrin and metalloproteinase domain-containing protein adm-2 (952 aa).

Over M1–T672 the chain is Extracellular. N-linked (GlcNAc...) asparagine glycans are attached at residues N125 and N301. A Peptidase M12B domain is found at R177 to P373. Disulfide bonds link C287-C368, C330-C352, and C332-C337. Position 312 (H312) interacts with Zn(2+). Residue E313 is part of the active site. Zn(2+)-binding residues include H316 and H322. Residues D379–N466 enclose the Disintegrin domain. N406 is a glycosylation site (N-linked (GlcNAc...) asparagine). Cystine bridges form between C438–C458, C624–C634, C628–C640, and C642–C651. In terms of domain architecture, EGF-like spans V620 to E652. The chain crosses the membrane as a helical span at residues L673–V693. At Y694–K952 the chain is on the cytoplasmic side. Disordered stretches follow at residues I778–T809 and S829–D938. Composition is skewed to basic and acidic residues over residues A798–T809 and P849–N873. Pro residues predominate over residues Q905–H914. Residues K925 to D938 are compositionally biased toward basic and acidic residues.

Requires Zn(2+) as cofactor. As to expression, expressed in hyp7 large epidermal syncytium (punctate distribution), seam cell syncytia, anterior epidermis, neurons located in the head, tail and central body, proximal oogenic cells (levels increasing in maturing oocytes) and myoepithelial cells of the spermatheca (at protein level). Not detected in mature sperm cells.

Its subcellular location is the cell membrane. The protein resides in the endosome membrane. The protein localises to the lysosome membrane. Functionally, metalloprotease that cleaves and releases a number of molecules. Negative regulator of lrp-1 protein levels, potentially by influencing its endosomal trafficking. Involved in regulating the molting process. In Caenorhabditis elegans, this protein is Disintegrin and metalloproteinase domain-containing protein adm-2.